A 396-amino-acid chain; its full sequence is Probable protein phosphatase 2C 25 (396 aa).

The interval 32–98 is disordered; that stretch reads ESLSLTLSHR…SPPGGVLKRK (67 aa). Residues 44–61 are compositionally biased toward low complexity; sequence QTSSPSSPSTTVSSPKSP. The region spanning 139–392 is the PPM-type phosphatase domain; the sequence is GYSVYCKRGR…DDISVMLIPL (254 aa). Mn(2+) contacts are provided by Asp175, Gly176, Asp338, and Asp383.

This sequence belongs to the PP2C family. In terms of assembly, interacts with MPK4 and MPK6. The cofactor is Mg(2+). Mn(2+) serves as cofactor.

The protein resides in the cytoplasm. The protein localises to the nucleus. It carries out the reaction O-phospho-L-seryl-[protein] + H2O = L-seryl-[protein] + phosphate. The enzyme catalyses O-phospho-L-threonyl-[protein] + H2O = L-threonyl-[protein] + phosphate. In terms of biological role, protein phosphatase that negatively regulates defense respones. Inactivates MPK4 and MPK6 MAP kinases involved in stress and defense signaling. This is Probable protein phosphatase 2C 25 from Arabidopsis thaliana (Mouse-ear cress).